The chain runs to 405 residues: Argininosuccinate synthase (405 aa).

ATP-binding positions include 11-19 (AYSGGLDTS) and A38. Residues Y91 and S96 each contribute to the L-citrulline site. Residue G121 coordinates ATP. Residues T123, N127, and D128 each contribute to the L-aspartate site. N127 is a binding site for L-citrulline. Positions 131, 182, 191, 267, and 279 each coordinate L-citrulline.

It belongs to the argininosuccinate synthase family. Type 1 subfamily. In terms of assembly, homotetramer.

The protein resides in the cytoplasm. It carries out the reaction L-citrulline + L-aspartate + ATP = 2-(N(omega)-L-arginino)succinate + AMP + diphosphate + H(+). The protein operates within amino-acid biosynthesis; L-arginine biosynthesis; L-arginine from L-ornithine and carbamoyl phosphate: step 2/3. In Sphingopyxis alaskensis (strain DSM 13593 / LMG 18877 / RB2256) (Sphingomonas alaskensis), this protein is Argininosuccinate synthase.